We begin with the raw amino-acid sequence, 404 residues long: Glycerol-1-phosphate dehydrogenase [NAD(P)+] (404 aa).

Residues Asp-55, 117–121 (GTVHD), and 139–142 (TAPS) contribute to the NAD(+) site. Asp-144 is a substrate binding site. NAD(+) is bound at residue Ser-148. Asp-191 provides a ligand contact to substrate. Asp-191 and His-271 together coordinate Ni(2+). Residue His-275 coordinates substrate. Residue His-291 participates in Ni(2+) binding.

It belongs to the glycerol-1-phosphate dehydrogenase family. In terms of assembly, homodimer. Requires Ni(2+) as cofactor.

The protein localises to the cytoplasm. It carries out the reaction sn-glycerol 1-phosphate + NAD(+) = dihydroxyacetone phosphate + NADH + H(+). It catalyses the reaction sn-glycerol 1-phosphate + NADP(+) = dihydroxyacetone phosphate + NADPH + H(+). Catalyzes the NAD(P)H-dependent reduction of dihydroxyacetonephosphate (DHAP or glycerone phosphate) to glycerol 1-phosphate (G1P). The G1P thus generated is probably used for the synthesis of phosphoglycerolipids in Gram-positive bacterial species. This chain is Glycerol-1-phosphate dehydrogenase [NAD(P)+], found in Geobacillus thermodenitrificans (strain NG80-2).